A 75-amino-acid chain; its full sequence is MKYDVIVYWYIWKEIYQSRNKRLISHRNTKVHNLIIEEHFVTIVINIHSVICINEVLFKHDEMFICWHSSEIDVW.

This is an uncharacterized protein from Vaccinia virus (strain Copenhagen) (VACV).